The sequence spans 150 residues: Deoxyuridine 5'-triphosphate nucleotidohydrolase (150 aa).

Substrate-binding positions include 69-71 (RSG), N82, 86-88 (LID), and M96.

The protein belongs to the dUTPase family. It depends on Mg(2+) as a cofactor.

It carries out the reaction dUTP + H2O = dUMP + diphosphate + H(+). The protein operates within pyrimidine metabolism; dUMP biosynthesis; dUMP from dCTP (dUTP route): step 2/2. Functionally, this enzyme is involved in nucleotide metabolism: it produces dUMP, the immediate precursor of thymidine nucleotides and it decreases the intracellular concentration of dUTP so that uracil cannot be incorporated into DNA. The chain is Deoxyuridine 5'-triphosphate nucleotidohydrolase from Acinetobacter baylyi (strain ATCC 33305 / BD413 / ADP1).